We begin with the raw amino-acid sequence, 127 residues long: uncharacterized protein (127 aa).

A helical membrane pass occupies residues 85–107 (VYLGKIGFVLLHVFYLSCIAYYD).

The protein resides in the mitochondrion membrane. This is an uncharacterized protein from Dictyostelium discoideum (Social amoeba).